A 174-amino-acid chain; its full sequence is Sarcoplasmic calcium-binding protein (174 aa).

At Ser-1 the chain carries N-acetylserine. 4 EF-hand domains span residues 3–38 (LWVQ…FAKE), 55–90 (GVWD…EAKS), 91–126 (VVEG…LGLD), and 127–160 (KTMA…FFMN). Positions 16, 18, 20, and 27 each coordinate Ca(2+). Residues Asp-104, Asn-106, Asp-108, Asn-110, Glu-115, Asp-138, Asn-140, Asp-142, and Glu-149 each coordinate Ca(2+).

Functionally, like parvalbumins, SCPs seem to be more abundant in fast contracting muscles, but no functional relationship can be established from this distribution. The chain is Sarcoplasmic calcium-binding protein from Hediste diversicolor (Sandworm).